Consider the following 305-residue polypeptide: tRNA uridine(34) hydroxylase (305 aa).

The 95-residue stretch at 125–219 (ADENTVVVDT…YLEEVPREDS (95 aa)) folds into the Rhodanese domain. The active-site Cysteine persulfide intermediate is the Cys179.

The protein belongs to the TrhO family.

The enzyme catalyses uridine(34) in tRNA + AH2 + O2 = 5-hydroxyuridine(34) in tRNA + A + H2O. Catalyzes oxygen-dependent 5-hydroxyuridine (ho5U) modification at position 34 in tRNAs. The polypeptide is tRNA uridine(34) hydroxylase (Brucella anthropi (strain ATCC 49188 / DSM 6882 / CCUG 24695 / JCM 21032 / LMG 3331 / NBRC 15819 / NCTC 12168 / Alc 37) (Ochrobactrum anthropi)).